Reading from the N-terminus, the 151-residue chain is Aspartate carbamoyltransferase regulatory chain (151 aa).

Zn(2+) contacts are provided by cysteine 108, cysteine 113, cysteine 138, and cysteine 141.

This sequence belongs to the PyrI family. Contains catalytic and regulatory chains. The cofactor is Zn(2+).

In terms of biological role, involved in allosteric regulation of aspartate carbamoyltransferase. The polypeptide is Aspartate carbamoyltransferase regulatory chain (Pyrobaculum neutrophilum (strain DSM 2338 / JCM 9278 / NBRC 100436 / V24Sta) (Thermoproteus neutrophilus)).